The following is a 277-amino-acid chain: Caspase-3 (277 aa).

N-acetylmethionine is present on Met1. Propeptides lie at residues 1–9 and 10–28; these read MENNETSVD and AKSI…KSMD. Lys11 carries the post-translational modification N6-acetyllysine. Ser26 carries the phosphoserine modification. Catalysis depends on residues His121 and Cys163. Position 163 is an S-nitrosocysteine; in inhibited form (Cys163).

It belongs to the peptidase C14A family. As to quaternary structure, heterotetramer that consists of two anti-parallel arranged heterodimers, each one formed by a 17 kDa (p17) and a 12 kDa (p12) subunit. Interacts with BIRC6/bruce. In terms of processing, cleavage by granzyme B, caspase-6, caspase-8 and caspase-10 generates the two active subunits. Additional processing of the propeptides is likely due to the autocatalytic activity of the activated protease. Active heterodimers between the small subunit of caspase-7 protease and the large subunit of caspase-3 also occur and vice versa. Post-translationally, S-nitrosylated on its catalytic site cysteine in unstimulated cell lines and denitrosylated upon activation of the Fas apoptotic pathway, associated with an increase in intracellular caspase activity. Fas therefore activates caspase-3 not only by inducing the cleavage of the caspase zymogen to its active subunits, but also by stimulating the denitrosylation of its active site thiol. Ubiquitinated by BIRC6; this activity is inhibited by DIABLO/SMAC.

The protein resides in the cytoplasm. It catalyses the reaction Strict requirement for an Asp residue at positions P1 and P4. It has a preferred cleavage sequence of Asp-Xaa-Xaa-Asp-|- with a hydrophobic amino-acid residue at P2 and a hydrophilic amino-acid residue at P3, although Val or Ala are also accepted at this position.. Inhibited by BIRC6; following inhibition of BIRC6-caspase binding by DIABLO/SMAC, BIRC6 is subjected to caspase cleavage, leading to an increase in active caspases. Functionally, involved in the activation cascade of caspases responsible for apoptosis execution. At the onset of apoptosis, it proteolytically cleaves poly(ADP-ribose) polymerase PARP1 at a '216-Asp-|-Gly-217' bond. Cleaves and activates sterol regulatory element binding proteins (SREBPs) between the basic helix-loop-helix leucine zipper domain and the membrane attachment domain. Cleaves and activates caspase-6, -7 and -9 (CASP6, CASP7 and CASP9, respectively). Cleaves and inactivates interleukin-18 (IL18). Triggers cell adhesion in sympathetic neurons through RET cleavage. Cleaves IL-1 beta between an Asp and an Ala, releasing the mature cytokine which is involved in a variety of inflammatory processes. Cleaves and inhibits serine/threonine-protein kinase AKT1 in response to oxidative stress. Acts as an inhibitor of type I interferon production during virus-induced apoptosis by mediating cleavage of antiviral proteins CGAS, IRF3 and MAVS, thereby preventing cytokine overproduction. Also involved in pyroptosis by mediating cleavage and activation of gasdermin-E (GSDME). Cleaves XRCC4 and phospholipid scramblase proteins XKR4, XKR8 and XKR9, leading to promote phosphatidylserine exposure on apoptotic cell surface. Cleaves BIRC6 following inhibition of BIRC6-caspase binding by DIABLO/SMAC. The sequence is that of Caspase-3 (CASP3) from Oryctolagus cuniculus (Rabbit).